The sequence spans 1463 residues: Collagen alpha-1(I) chain (1463 aa).

Residues 1–22 form the signal peptide; sequence MFSFVDLRLLLLLAATALLTHG. The propeptide at 23–161 is N-terminal propeptide; that stretch reads QEEGQEEGQE…PPGLGGNFAP (139 aa). The VWFC domain occupies 38–96; it reads VTCVQNGLRYHDRDVWKPVPCQICVCDNGNVLCDDVICDELKDCPNAKVPTDECCPVCP. Residues 98–1217 are disordered; that stretch reads GQESPTDQET…AHDGGRYYRA (1120 aa). Residues 138–153 show a composition bias toward pro residues; the sequence is PGLPGPPGPPGPPGPP. Q162 is modified (pyrrolidone carboxylic acid). The nonhelical region (N-terminal) stretch occupies residues 162 to 177; the sequence is QLSYGYDEKSTGISVP. The residue at position 170 (K170) is an Allysine. Residue S171 is modified to Phosphoserine. The tract at residues 178-1191 is triple-helical region; the sequence is GPMGPSGPRG…PGPPGPPGPP (1014 aa). 11 positions are modified to 4-hydroxyproline: P189, P192, P195, P204, P207, P210, P225, P240, P246, P255, and P261. Residues 197-216 show a composition bias toward low complexity; it reads PQGFQGPPGEPGEPGASGPM. Residues 228–242 show a composition bias toward basic and acidic residues; it reads NGDDGEAGKPGRPGE. K264 is modified (5-hydroxylysine; alternate). The O-linked (Gal...) hydroxylysine; alternate glycan is linked to K264. The residue at position 270 (S270) is a Phosphoserine. K276 and K285 each carry 5-hydroxylysine. A compositionally biased stretch (low complexity) spans 278 to 294; the sequence is DAGPAGPKGEPGSPGEN. P288, P291, P297, P306, and P312 each carry 4-hydroxyproline. Residues 317-330 show a composition bias toward low complexity; sequence PAGARGNDGATGAA. Over residues 332–344 the composition is skewed to pro residues; the sequence is PPGPTGPAGPPGF. P333, P342, and P345 each carry 4-hydroxyproline. The segment covering 349–358 has biased composition (gly residues); the sequence is GAKGEGGPQG. 8 positions are modified to 4-hydroxyproline: P372, P375, P387, P393, P402, P408, P411, and P426. The span at 378 to 417 shows a compositional bias: low complexity; sequence AGAAGPAGNPGADGQPGAKGANGAPGIAGAPGFPGARGPS. Position 429 is a 5-hydroxylysine (K429). Residues P435, P438, P450, P459, P474, P480, P489, and P495 each carry the 4-hydroxyproline modification. Residues 484-493 show a composition bias toward gly residues; that stretch reads GERGGPGSRG. The span at 494–525 shows a compositional bias: low complexity; the sequence is FPGADGVAGPKGPAGERGAPGPAGPKGSPGEA. At K504 the chain carries 5-hydroxylysine. P513, P522, P528, P534, P543, P546, P555, P564, P570, P582, P591, P600, P603, P621, P639, P645, P651, P657, P663, P669, P681, P690, P702, P714, P717, P723, P729, and P738 each carry 4-hydroxyproline. Over residues 537–563 the composition is skewed to low complexity; sequence KGLTGSPGSPGPDGKTGPPGPAGQDGR. Residues 572 to 591 show a composition bias toward low complexity; sequence ARGQAGVMGFPGPKGAAGEP. Low complexity predominate over residues 633–660; that stretch reads QGPAGSPGFQGLPGPAGPPGEAGKPGEQ. Residues 695–723 show a composition bias toward low complexity; sequence PRGANGAPGNDGAKGDAGAPGAPGSQGAP. Positions 744–746 match the Cell attachment site motif; it reads RGD. The residue at position 750 (K750) is a 5-hydroxylysine. 3 positions are modified to 4-hydroxyproline: P756, P771, and P777. The segment covering 783–797 has biased composition (low complexity); that stretch reads AGPSGPAGPTGARGA. S786 carries the post-translational modification Phosphoserine. 8 positions are modified to 4-hydroxyproline: P798, P804, P807, P816, P822, P840, P849, and P858. Over residues 810–837 the composition is skewed to low complexity; that stretch reads AGFAGPPGADGQPGAKGEPGDAGAKGDA. Over residues 839–851 the composition is skewed to pro residues; the sequence is PPGPAGPAGPPGP. The segment covering 852–882 has biased composition (low complexity); that stretch reads IGNVGAPGPKGARGSAGPPGATGFPGAAGRV. At K861 the chain carries 5-hydroxylysine. 4-hydroxyproline is present on residues P870 and P876. P884 carries the 3-hydroxyproline modification. 4-hydroxyproline is present on residues P885, P894, P897, P918, P927, P936, P945, P963, P972, P975, P981, P996, P1002, P1008, P1017, and P1023. The segment covering 930–954 has biased composition (low complexity); sequence AGEKGAPGADGPAGAPGTPGPQGIA. Positions 995 to 1005 are enriched in pro residues; that stretch reads PPGPMGPPGLA. A 5-hydroxylysine modification is found at K1032. Pro residues predominate over residues 1041-1056; sequence AGPPGAPGAPGAPGPV. 4-hydroxyproline is present on residues P1044, P1047, and P1050. Residues 1077–1091 are compositionally biased toward low complexity; it reads IGPVGARGPAGPQGP. The short motif at 1092 to 1094 is the Cell attachment site element; it reads RGD. Positions 1092–1106 are enriched in basic and acidic residues; that stretch reads RGDKGETGEQGDRGI. A 5-hydroxylysine modification is found at K1095. K1107 is subject to 5-hydroxylysine; alternate. O-linked (Gal...) hydroxylysine; alternate glycosylation is present at K1107. A 4-hydroxyproline mark is found at P1119, P1122, P1125, P1143, and P1158. Low complexity predominate over residues 1125–1149; the sequence is PGEQGPSGASGPAGPRGPPGSAGSP. P1163 bears the 3-hydroxyproline mark. Residue P1164 is modified to 4-hydroxyproline. A compositionally biased stretch (pro residues) spans 1176 to 1191; it reads AGPPGPPGPPGPPGPP. A 3-hydroxyproline modification is found at P1178. Residue P1179 is modified to 4-hydroxyproline. P1181 is modified (3-hydroxyproline). Residue P1182 is modified to 4-hydroxyproline. 3-hydroxyproline is present on P1184. A 4-hydroxyproline mark is found at P1185, P1188, and P1191. Positions 1192–1215 are nonhelical region (C-terminal); that stretch reads SGGYDLSFLPQPPQEKAHDGGRYY. A compositionally biased stretch (basic and acidic residues) spans 1206 to 1217; it reads EKAHDGGRYYRA. K1207 carries the post-translational modification Allysine. Residues 1218–1463 constitute a propeptide, C-terminal propeptide; sequence DDANVVRDRD…GFDVGPACFL (246 aa). A Fibrillar collagen NC1 domain is found at 1228–1463; the sequence is LEVDTTLKSL…GFDVGPACFL (236 aa). 3 disulfide bridges follow: C1258–C1290, C1298–C1461, and C1369–C1414. Ca(2+)-binding residues include D1276, N1278, Q1279, C1281, and D1284.

The protein belongs to the fibrillar collagen family. In terms of assembly, trimers of one alpha 2(I) and two alpha 1(I) chains. Interacts with MRC2. Interacts with TRAM2. Interacts with MFAP4 in a Ca (2+)-dependent manner. In terms of processing, contains mostly 4-hydroxyproline. Proline residues at the third position of the tripeptide repeating unit (G-X-Y) are hydroxylated in some or all of the chains. Contains 3-hydroxyproline at a few sites. This modification occurs on the first proline residue in the sequence motif Gly-Pro-Hyp, where Hyp is 4-hydroxyproline. Post-translationally, lysine residues at the third position of the tripeptide repeating unit (G-X-Y) are 5-hydroxylated in some or all of the chains. In terms of processing, O-glycosylated on hydroxylated lysine residues. The O-linked glycan consists of a Glc-Gal disaccharide. Forms the fibrils of tendon, ligaments and bones. In bones the fibrils are mineralized with calcium hydroxyapatite.

It localises to the secreted. Its subcellular location is the extracellular space. The protein resides in the extracellular matrix. In terms of biological role, type I collagen is a member of group I collagen (fibrillar forming collagen). The chain is Collagen alpha-1(I) chain (COL1A1) from Bos taurus (Bovine).